Reading from the N-terminus, the 1036-residue chain is Ephrin type-A receptor 6 (1036 aa).

The signal sequence occupies residues 1-22 (MGGCEVREFLLQFGFFLPLLTA). Residues 23–550 (WPGDCSHVSN…MAAEQGQILV (528 aa)) lie on the Extracellular side of the membrane. The Eph LBD domain maps to 34-212 (QVVLLDTTTV…FYKKCPFTVR (179 aa)). Fibronectin type-III domains are found at residues 331 to 441 (PPSA…TDQD) and 442 to 537 (APSL…TGDE). N-linked (GlcNAc...) asparagine glycans are attached at residues asparagine 343, asparagine 397, and asparagine 410. A helical membrane pass occupies residues 551–571 (IATAAVGGFTLLVILTLFFLI). At 572 to 1036 (TGRCQWYIKA…MHIQEKGFHV (465 aa)) the chain is on the cytoplasmic side. 2 positions are modified to phosphotyrosine; by autocatalysis: tyrosine 606 and tyrosine 612. Residues 631-944 (IRIERVIGAG…RNPSALHTLV (314 aa)) enclose the Protein kinase domain. Residues 637-645 (IGAGEFGEV) and lysine 663 contribute to the ATP site. Residue aspartate 798 is the Proton acceptor of the active site. 2 positions are modified to phosphotyrosine; by autocatalysis: tyrosine 831 and tyrosine 978. Residues 961–1025 (PLFVTVGDWL…VSSIQTLRLH (65 aa)) form the SAM domain. The short motif at 1034–1036 (FHV) is the PDZ-binding element.

This sequence belongs to the protein kinase superfamily. Tyr protein kinase family. Ephrin receptor subfamily. Heterotetramer upon binding of the ligand. The heterotetramer is composed of an ephrin dimer and a receptor dimer. Oligomerization is probably required to induce biological responses. Interacts (via SAM domain) with ANKS1A (via SAM domain). As to expression, expressed in brain and testis.

The protein resides in the membrane. It carries out the reaction L-tyrosyl-[protein] + ATP = O-phospho-L-tyrosyl-[protein] + ADP + H(+). Receptor tyrosine kinase which binds promiscuously GPI-anchored ephrin-A family ligands residing on adjacent cells, leading to contact-dependent bidirectional signaling into neighboring cells. The signaling pathway downstream of the receptor is referred to as forward signaling while the signaling pathway downstream of the ephrin ligand is referred to as reverse signaling. This Homo sapiens (Human) protein is Ephrin type-A receptor 6 (EPHA6).